Here is a 259-residue protein sequence, read N- to C-terminus: Small ribosomal subunit protein uS2 (259 aa).

Residues 234 to 259 (VAEDSEEVSTVDADAITAEDFETEEV) are disordered. A compositionally biased stretch (acidic residues) spans 250 to 259 (TAEDFETEEV).

The protein belongs to the universal ribosomal protein uS2 family.

In Sulfurimonas denitrificans (strain ATCC 33889 / DSM 1251) (Thiomicrospira denitrificans (strain ATCC 33889 / DSM 1251)), this protein is Small ribosomal subunit protein uS2.